The chain runs to 94 residues: Acylphosphatase (94 aa).

Positions 8 to 94 (RLTAWVHGRV…REQITGFHER (87 aa)) constitute an Acylphosphatase-like domain. Catalysis depends on residues Arg23 and Asn41.

Belongs to the acylphosphatase family.

It carries out the reaction an acyl phosphate + H2O = a carboxylate + phosphate + H(+). The sequence is that of Acylphosphatase (acyP) from Mycobacterium sp. (strain JLS).